We begin with the raw amino-acid sequence, 182 residues long: Peptidyl-prolyl cis-trans isomerase C, mitochondrial (182 aa).

A mitochondrion-targeting transit peptide spans 1 to 20; the sequence is MFKRSIIQQSRLFSNSASRL. The PPIase cyclophilin-type domain occupies 25–181; sequence FFDPAVNGTK…AEIVIEEAGE (157 aa).

Belongs to the cyclophilin-type PPIase family.

Its subcellular location is the mitochondrion matrix. The catalysed reaction is [protein]-peptidylproline (omega=180) = [protein]-peptidylproline (omega=0). Inhibited by the immunosuppressant drug cyclosporin A and by SDZ NIM811, a PPIase inhibitor. Its function is as follows. PPIases accelerate the folding of proteins. It catalyzes the cis-trans isomerization of proline imidic peptide bonds in oligopeptides. This isozyme is required for growth on lactate at high temperature. This chain is Peptidyl-prolyl cis-trans isomerase C, mitochondrial (CPR3), found in Saccharomyces cerevisiae (strain ATCC 204508 / S288c) (Baker's yeast).